Consider the following 673-residue polypeptide: UvrABC system protein B (673 aa).

A Helicase ATP-binding domain is found at alanine 28–leucine 414. Residue glycine 41–threonine 48 participates in ATP binding. The Beta-hairpin signature appears at tyrosine 94–isoleucine 117. Residues glutamine 433 to isoleucine 595 enclose the Helicase C-terminal domain. A UVR domain is found at arginine 633–isoleucine 668.

This sequence belongs to the UvrB family. Forms a heterotetramer with UvrA during the search for lesions. Interacts with UvrC in an incision complex.

It localises to the cytoplasm. In terms of biological role, the UvrABC repair system catalyzes the recognition and processing of DNA lesions. A damage recognition complex composed of 2 UvrA and 2 UvrB subunits scans DNA for abnormalities. Upon binding of the UvrA(2)B(2) complex to a putative damaged site, the DNA wraps around one UvrB monomer. DNA wrap is dependent on ATP binding by UvrB and probably causes local melting of the DNA helix, facilitating insertion of UvrB beta-hairpin between the DNA strands. Then UvrB probes one DNA strand for the presence of a lesion. If a lesion is found the UvrA subunits dissociate and the UvrB-DNA preincision complex is formed. This complex is subsequently bound by UvrC and the second UvrB is released. If no lesion is found, the DNA wraps around the other UvrB subunit that will check the other stand for damage. This Protochlamydia amoebophila (strain UWE25) protein is UvrABC system protein B.